We begin with the raw amino-acid sequence, 158 residues long: Snaclec agglucetin subunit alpha-2 (158 aa).

The first 23 residues, 1–23, serve as a signal peptide directing secretion; the sequence is MGRFIFVSFGLLVVFLSLSGTGA. 3 disulfide bridges follow: C27-C38, C55-C152, and C127-C144. Positions 34–153 constitute a C-type lectin domain; that stretch reads YDQYCYQVIK…CIQLNPFVCK (120 aa).

This sequence belongs to the snaclec family. In terms of assembly, heterotetramer of the subunits alpha-1, alpha-2, beta-1 and beta-2; disulfide-linked. Expressed by the venom gland.

It is found in the secreted. In terms of biological role, agglucetin specifically causes platelet aggregation and surface exposure of integrin alpha-IIb/beta-3 with a GPIb-(GP1BA-) dependent manner in washed platelets. It binds to human platelets in a saturable manner, and its binding is specifically blocked by anti-GP Ib mAb. It regulates endothelial cell survival and promotes angiogenesis by activating integrin alpha-v/beta-3 signaling through FAK/phosphatidylinositol 3-kinase (PI3K)/Akt pathway. The polypeptide is Snaclec agglucetin subunit alpha-2 (Deinagkistrodon acutus (Hundred-pace snake)).